Reading from the N-terminus, the 363-residue chain is Phosphoserine aminotransferase (363 aa).

Position 42 (Arg42) interacts with L-glutamate. Pyridoxal 5'-phosphate contacts are provided by residues 76–77, Trp101, Thr151, Asp170, and Gln193; that span reads AS. Lys194 is subject to N6-(pyridoxal phosphate)lysine. A pyridoxal 5'-phosphate-binding site is contributed by 234–235; it reads NT.

Belongs to the class-V pyridoxal-phosphate-dependent aminotransferase family. SerC subfamily. As to quaternary structure, homodimer. Pyridoxal 5'-phosphate is required as a cofactor.

It localises to the cytoplasm. The enzyme catalyses O-phospho-L-serine + 2-oxoglutarate = 3-phosphooxypyruvate + L-glutamate. It catalyses the reaction 4-(phosphooxy)-L-threonine + 2-oxoglutarate = (R)-3-hydroxy-2-oxo-4-phosphooxybutanoate + L-glutamate. It functions in the pathway amino-acid biosynthesis; L-serine biosynthesis; L-serine from 3-phospho-D-glycerate: step 2/3. Its function is as follows. Catalyzes the reversible conversion of 3-phosphohydroxypyruvate to phosphoserine and of 3-hydroxy-2-oxo-4-phosphonooxybutanoate to phosphohydroxythreonine. In Listeria monocytogenes serovar 1/2a (strain ATCC BAA-679 / EGD-e), this protein is Phosphoserine aminotransferase.